A 473-amino-acid chain; its full sequence is MASCVGSRTLSKDDVNYKMHFRMINEQQVEDITIDFFYRPHTITLLSFTIVSLMYFAFTRDDSVPEDNIWRGILSVIFFFLIISVLAFPNGPFTRPHPALWRMVFGLSVLYFLFLVFLLFLNFEQVKSLMYWLDPNLRYATREADVMEYAVNCHVITWERIISHFDIFAFGHFWGWAMKALLIRSYGLCWTISITWELTELFFMHLLPNFAECWWDQVILDILLCNGGGIWLGMVVCRFLEMRTYHWASFKDIHTTTGKIKRAVLQFTPASWTYVRWFDPKSSFQRVAGVYLFMIIWQLTELNTFFLKHIFVFQASHPLSWGRILFIGGITAPTVRQYYAYLTDTQCKRVGTQCWVFGVIGFLEAIVCIKFGQDLFSKTQILYVVLWLLCVAFTTFLCLYGMIWYAEHYGHREKTYSECEDGTYSPEISWHHRKGTKGSEDSPPKHAGNNESHSSRRRNRHSKSKVTNGVGKK.

Alanine 2 carries the post-translational modification N-acetylalanine. At 2–35 (ASCVGSRTLSKDDVNYKMHFRMINEQQVEDITID) the chain is on the cytoplasmic side. Residues 36–56 (FFYRPHTITLLSFTIVSLMYF) traverse the membrane as a helical segment. The Lumenal segment spans residues 57-72 (AFTRDDSVPEDNIWRG). A helical membrane pass occupies residues 73 to 93 (ILSVIFFFLIISVLAFPNGPF). The Cytoplasmic portion of the chain corresponds to 94 to 102 (TRPHPALWR). Residues 103-123 (MVFGLSVLYFLFLVFLLFLNF) traverse the membrane as a helical segment. The Lumenal portion of the chain corresponds to 124–186 (EQVKSLMYWL…AMKALLIRSY (63 aa)). A helical transmembrane segment spans residues 187-207 (GLCWTISITWELTELFFMHLL). Residues 208-216 (PNFAECWWD) are Cytoplasmic-facing. The helical transmembrane segment at 217–237 (QVILDILLCNGGGIWLGMVVC) threads the bilayer. At 238–286 (RFLEMRTYHWASFKDIHTTTGKIKRAVLQFTPASWTYVRWFDPKSSFQR) the chain is on the lumenal side. A helical transmembrane segment spans residues 287–307 (VAGVYLFMIIWQLTELNTFFL). Over 308-319 (KHIFVFQASHPL) the chain is Cytoplasmic. Residues 320–342 (SWGRILFIGGITAPTVRQYYAYL) form a helical membrane-spanning segment. Residues 343–355 (TDTQCKRVGTQCW) lie on the Lumenal side of the membrane. Residues 356–376 (VFGVIGFLEAIVCIKFGQDLF) traverse the membrane as a helical segment. Residues 377 to 383 (SKTQILY) lie on the Cytoplasmic side of the membrane. The helical transmembrane segment at 384–404 (VVLWLLCVAFTTFLCLYGMIW) threads the bilayer. Residues 405–473 (YAEHYGHREK…SKVTNGVGKK (69 aa)) are Lumenal-facing. Residues serine 417, serine 425, serine 442, and serine 454 each carry the phosphoserine modification. Residues 430-473 (WHHRKGTKGSEDSPPKHAGNNESHSSRRRNRHSKSKVTNGVGKK) form a disordered region. Positions 455 to 464 (SRRRNRHSKS) are enriched in basic residues.

This sequence belongs to the phosphatidyl serine synthase family.

It localises to the endoplasmic reticulum membrane. It catalyses the reaction a 1,2-diacyl-sn-glycero-3-phosphoethanolamine + L-serine = a 1,2-diacyl-sn-glycero-3-phospho-L-serine + ethanolamine. It carries out the reaction a 1,2-diacyl-sn-glycero-3-phosphocholine + L-serine = a 1,2-diacyl-sn-glycero-3-phospho-L-serine + choline. Its pathway is phospholipid metabolism; phosphatidylserine biosynthesis. With respect to regulation, requires calcium ions. Inhibited by exogenous phosphatidylserine. Catalyzes a base-exchange reaction in which the polar head group of phosphatidylethanolamine (PE) or phosphatidylcholine (PC) is replaced by L-serine. Catalyzes mainly the conversion of phosphatidylcholine. Also converts, in vitro and to a lesser extent, phosphatidylethanolamine. This is Phosphatidylserine synthase 1 (PTDSS1) from Homo sapiens (Human).